The sequence spans 66 residues: Large ribosomal subunit protein bL35 (66 aa).

2 stretches are compositionally biased toward basic residues: residues M1 to R16 and K23 to R45. A disordered region spans residues M1 to G53.

The protein belongs to the bacterial ribosomal protein bL35 family.

The protein is Large ribosomal subunit protein bL35 of Enterococcus faecalis (strain ATCC 700802 / V583).